The primary structure comprises 328 residues: L-lactate dehydrogenase (328 aa).

NAD(+) is bound by residues Val18, Glu39, Lys46, Tyr71, and Gly85–Ala86. Residues Gln88 and Arg94 each coordinate substrate. Residues Ser107, Ala124–Asn126, and Ser149 contribute to the NAD(+) site. Asn126–Asp129 is a substrate binding site. Residue Asp154–Arg157 participates in substrate binding. Beta-D-fructose 1,6-bisphosphate contacts are provided by Arg159 and His174. The active-site Proton acceptor is the His181. At Tyr226 the chain carries Phosphotyrosine. Thr235 provides a ligand contact to substrate.

The protein belongs to the LDH/MDH superfamily. LDH family. As to quaternary structure, homotetramer.

It localises to the cytoplasm. It catalyses the reaction (S)-lactate + NAD(+) = pyruvate + NADH + H(+). Its pathway is fermentation; pyruvate fermentation to lactate; (S)-lactate from pyruvate: step 1/1. With respect to regulation, allosterically activated by fructose 1,6-bisphosphate (FBP). Catalyzes the conversion of lactate to pyruvate. The chain is L-lactate dehydrogenase from Streptococcus thermophilus (strain ATCC BAA-250 / LMG 18311).